The following is a 495-amino-acid chain: MDDKLLLDTFIKQVIEQENYTELDRNYLYNRILNLVGEGVEKLTTTKNEIIDLKNELVEYAVQHGKVGETLNEQDCLGAELMNFITPLPSKVNQDFWQTYQQKSPEEAIQNFYDLSKRNDYIKTKAIAKNIYFPVETSYGQLEITINLSKPEKDPKQIALAKKMKASGYPLCQLCMENEGYQGRINYPARANHRIIRFDLDDKQWGFQYSPYAYFNEHCIFLDTIHEPMEITKQTFNNLLGIIEQFPGYFVGSNADLPIVGGSILTHEHYQGGRHTFAMEKAPIETELKFAGYEDIQAGIVKWPMSVIRLRGNSKEDLVDLADKILKTWRGYSDEEVSVLAESNGEKHHTITPIARKRDGQLELDLVLRDNQTSEQYPDGIYHPHPDVQHIKKENIGLIEVMGLAILPPRLKGELQEVEKYLLGQENKMEEYHQVWADDIKQKYSDISQENVGTIIQQELGRVFARVLEDAGVYKHDETGRMAFKRFVEEVGIVD.

Belongs to the galactose-1-phosphate uridylyltransferase type 2 family.

The protein resides in the cytoplasm. The enzyme catalyses alpha-D-galactose 1-phosphate + UDP-alpha-D-glucose = alpha-D-glucose 1-phosphate + UDP-alpha-D-galactose. It functions in the pathway carbohydrate metabolism; galactose metabolism. The polypeptide is Galactose-1-phosphate uridylyltransferase (Ligilactobacillus salivarius (strain UCC118) (Lactobacillus salivarius)).